The primary structure comprises 500 residues: Histidine--tRNA ligase (500 aa).

It belongs to the class-II aminoacyl-tRNA synthetase family. Homodimer.

It localises to the cytoplasm. It carries out the reaction tRNA(His) + L-histidine + ATP = L-histidyl-tRNA(His) + AMP + diphosphate + H(+). The sequence is that of Histidine--tRNA ligase from Ruegeria sp. (strain TM1040) (Silicibacter sp.).